A 1046-amino-acid polypeptide reads, in one-letter code: Toluene efflux pump membrane transporter TtgE (1046 aa).

Helical transmembrane passes span 10–30 (IFAW…LTKM), 339–359 (SVVH…FLFL), 370–390 (LAVP…GISI), 392–412 (VLTM…AIVV), 440–460 (GALV…AFFG), 470–490 (FAVT…IFTP), 542–562 (LIFA…PKAF), 871–891 (APML…ALYE), 895–915 (VPMS…LATL), 927–947 (VGLM…IEFA), 973–993 (IIMT…ATGA), and 1008–1028 (GMIT…VVVV).

This sequence belongs to the resistance-nodulation-cell division (RND) (TC 2.A.6) family.

The protein resides in the cell inner membrane. Functionally, the inner membrane transporter component of an inducible organic solvent efflux pump. Involved in export of toluene and styrene but not of m-xylene, propylbenzene or ethylbenzene. Is not involved in antibiotic or AMP efflux. The polypeptide is Toluene efflux pump membrane transporter TtgE (ttgE) (Pseudomonas putida (strain DOT-T1E)).